Here is a 173-residue protein sequence, read N- to C-terminus: Large ribosomal subunit protein uL18 (173 aa).

This sequence belongs to the universal ribosomal protein uL18 family. In terms of assembly, part of the 50S ribosomal subunit. Contacts the 5S and 23S rRNAs.

Its function is as follows. This is one of the proteins that bind and probably mediate the attachment of the 5S RNA into the large ribosomal subunit, where it forms part of the central protuberance. This is Large ribosomal subunit protein uL18 from Methanococcoides burtonii (strain DSM 6242 / NBRC 107633 / OCM 468 / ACE-M).